Consider the following 319-residue polypeptide: Lambda-crystallin homolog (319 aa).

An N-acetylalanine modification is found at alanine 2. Position 3 is a phosphoserine (serine 3). NAD(+) is bound by residues leucine 16–isoleucine 17, aspartate 36, glutamate 97, and lysine 102.

Belongs to the 3-hydroxyacyl-CoA dehydrogenase family. In terms of assembly, homodimer.

Its subcellular location is the cytoplasm. It catalyses the reaction L-gulonate + NAD(+) = 3-dehydro-L-gulonate + NADH + H(+). With respect to regulation, inhibited by malonate. In terms of biological role, has high L-gulonate 3-dehydrogenase activity. It also exhibits low dehydrogenase activity toward L-3-hydroxybutyrate (HBA) and L-threonate. In Rattus norvegicus (Rat), this protein is Lambda-crystallin homolog (Cryl1).